Consider the following 264-residue polypeptide: tRNA pseudouridine synthase A (264 aa).

D51 acts as the Nucleophile in catalysis. Y109 contributes to the substrate binding site.

This sequence belongs to the tRNA pseudouridine synthase TruA family. In terms of assembly, homodimer.

The catalysed reaction is uridine(38/39/40) in tRNA = pseudouridine(38/39/40) in tRNA. Formation of pseudouridine at positions 38, 39 and 40 in the anticodon stem and loop of transfer RNAs. This is tRNA pseudouridine synthase A from Yersinia pseudotuberculosis serotype O:1b (strain IP 31758).